Reading from the N-terminus, the 1008-residue chain is Serine/threonine-protein kinase PRP4 homolog (1008 aa).

Positions 1-103 are disordered; the sequence is MAAAEAPSLR…PAKRTKLDDL (103 aa). Alanine 2 is modified (N-acetylalanine). Phosphoserine is present on residues serine 8, serine 20, serine 23, and serine 32. Composition is skewed to basic residues over residues 39–59 and 67–81; these read KHSR…KHKH and RKHK…HKRK. Residues 82 to 91 are compositionally biased toward basic and acidic residues; it reads EVADASDKEG. 2 positions are modified to phosphoserine: serine 87 and serine 93. N6-acetyllysine; alternate is present on lysine 99. Lysine 99 is covalently cross-linked (Glycyl lysine isopeptide (Lys-Gly) (interchain with G-Cter in SUMO2); alternate). Residue lysine 111 forms a Glycyl lysine isopeptide (Lys-Gly) (interchain with G-Cter in SUMO2) linkage. Lysine 117 participates in a covalent cross-link: Glycyl lysine isopeptide (Lys-Gly) (interchain with G-Cter in SUMO2); alternate. Lysine 117 is covalently cross-linked (Glycyl lysine isopeptide (Lys-Gly) (interchain with G-Cter in SUMO1); alternate). Serine 131 is subject to Phosphoserine. Tyrosine 140 carries the phosphotyrosine modification. Disordered stretches follow at residues 140 to 536 and 560 to 584; these read YESG…EDEE and SNLS…SPDD. Serine 142, serine 144, and serine 166 each carry phosphoserine. Residues 157-168 show a composition bias toward low complexity; the sequence is GNRSSTRSSSTK. Residues lysine 170 and lysine 177 each participate in a glycyl lysine isopeptide (Lys-Gly) (interchain with G-Cter in SUMO2) cross-link. Basic residues-rich tracts occupy residues 179–202 and 214–230; these read STKK…KKSK and RSKS…SKRS. Serine 239, serine 241, serine 257, serine 277, serine 283, serine 292, and serine 294 each carry phosphoserine. Positions 247–270 are enriched in basic and acidic residues; the sequence is RSQEKVGKARSPVDDKAKVEDKSK. Over residues 302-315 the composition is skewed to basic residues; it reads SKDRRSRSKERKSK. The span at 316–325 shows a compositional bias: basic and acidic residues; the sequence is RPEADKEKKP. Phosphoserine occurs at positions 328, 354, 356, 366, and 368. Over residues 342-367 the composition is skewed to basic residues; the sequence is PSRRPGRSPKRRSLSPKQRDKSRRSR. Residue threonine 385 is modified to Phosphothreonine. Serine 387 is modified (phosphoserine). 2 stretches are compositionally biased toward basic and acidic residues: residues 395–408 and 415–429; these read RSLE…ERRR and RPRD…RSKD. A phosphoserine mark is found at serine 427, serine 431, and serine 437. Residues 438–498 show a composition bias toward basic residues; it reads PARRRASRSP…RGGRRRRSRS (61 aa). 8 positions are modified to phosphoserine: serine 519, serine 520, serine 521, serine 566, serine 570, serine 577, serine 579, and serine 581. Positions 519–536 are enriched in acidic residues; that stretch reads SSSDDNLEDFDVEEEDEE. A compositionally biased stretch (low complexity) spans 563–582; sequence SVPSEPSSPQSSTRSRSPSP. Glycyl lysine isopeptide (Lys-Gly) (interchain with G-Cter in SUMO2) cross-links involve residues lysine 594 and lysine 660. The Protein kinase domain maps to 688–1004; the sequence is YNVYGYTGQG…INQALQHAFI (317 aa). ATP is bound by residues 694–702 and lysine 718; that span reads TGQGVFSNV. Lysine 718 carries the post-translational modification N6-acetyllysine. Aspartate 816 acts as the Proton acceptor in catalysis. Tyrosine 850 carries the post-translational modification Phosphotyrosine. Residue serine 853 is modified to Phosphoserine.

Belongs to the protein kinase superfamily. CMGC Ser/Thr protein kinase family. In terms of assembly, interacts with CLK1 C-terminus. Associates with the U5 snRNP and NCOR1 deacetylase complexes. Identified in the spliceosome C complex. In terms of processing, phosphorylated by CLK1. Autophosphorylated; phosphorylation inhibits interaction with its targets, such as PRPF6 or SMARCA4.

It is found in the nucleus. The protein localises to the chromosome. The protein resides in the centromere. It localises to the kinetochore. The catalysed reaction is L-seryl-[protein] + ATP = O-phospho-L-seryl-[protein] + ADP + H(+). The enzyme catalyses L-threonyl-[protein] + ATP = O-phospho-L-threonyl-[protein] + ADP + H(+). Its function is as follows. Serine/threonine kinase involved in spliceosomal assembly as well as mitosis and signaling regulation. Connects chromatin mediated regulation of transcription and pre-mRNA splicing. During spliceosomal assembly, interacts with and phosphorylates PRPF6 and PRPF31, components of the U4/U6-U5 tri-small nuclear ribonucleoprotein (snRNP), to facilitate the formation of the spliceosome B complex. Plays a role in regulating transcription and the spindle assembly checkpoint (SAC). Associates with U5 snRNP and NCOR1 deacetylase complexes which may allow a coordination of pre-mRNA splicing with chromatin remodeling events involved in transcriptional regulation. Associates and probably phosphorylates SMARCA4 and NCOR1. Phosphorylates SRSF1. Associates with kinetochores during mitosis and is necessary for recruitment and maintenance of the checkpoint proteins such as MAD1L1 and MAD12L1 at the kinetochores. Phosphorylates and regulates the activity of the transcription factors such as ELK1 and KLF13. Phosphorylates nuclear YAP1 and WWTR1/TAZ which induces nuclear exclusion and regulates Hippo signaling pathway, involved in tissue growth control. This chain is Serine/threonine-protein kinase PRP4 homolog (PRP4K), found in Bos taurus (Bovine).